The following is a 1641-amino-acid chain: Histone-lysine N-methyltransferase SETD1 (1641 aa).

The tract at residues 1–23 is disordered; it reads MQDVRNINLVNNSSNSHDSSLAN. Positions 8–23 are enriched in low complexity; it reads NLVNNSSNSHDSSLAN. Residues 101 to 179 form the RRM domain; it reads VEVTIVNLND…KILDVFCDPF (79 aa). Disordered stretches follow at residues 236–384, 537–596, 831–915, 930–949, 1119–1155, and 1205–1226; these read YTTQ…IDQR, APPF…SDEE, RIRK…SSSS, KART…NLNQ, QEKR…RKTA, and NSKG…SSQA. The span at 244–284 shows a compositional bias: basic and acidic residues; that stretch reads IPNRSRDRNWNRDKERERDRHFKERSRHSSERSYDRDRGMR. Positions 291–300 are enriched in basic residues; it reads IRRRRTFYRR. Basic and acidic residues-rich tracts occupy residues 308 to 341 and 349 to 384; these read EDSR…ESFR and KGRD…IDQR. Residues 556–568 show a composition bias toward low complexity; the sequence is EVFSDVNSDSNNS. Composition is skewed to basic and acidic residues over residues 569–579 and 844–867; these read ENKKRSCEKNN and NFLE…KEDS. Positions 904–915 are enriched in low complexity; that stretch reads SASSFFSSSSSS. Composition is skewed to basic and acidic residues over residues 930–939 and 1119–1128; these read KARTSEEDSP and QEKRIEKSLD. Positions 1091–1132 form a coiled coil; that stretch reads SEEEKEYQERRKRNTEYMAQMEREFLEEQEKRIEKSLDKNLQ. Polar residues-rich tracts occupy residues 1129-1145 and 1205-1217; these read KNLQ…NSPR and NSKG…QSPV. Residues 1473–1478 carry the RxxxRR motif motif; it reads RSNQRR. The SET domain occupies 1502–1619; sequence KQLKFAKSAI…INEEITYDYK (118 aa). Tyr1618 contacts S-adenosyl-L-methionine. In terms of domain architecture, Post-SET spans 1625-1641; it reads EKIPCLCGAQGCRGTLN.

This sequence belongs to the class V-like SAM-binding methyltransferase superfamily. In terms of assembly, component of the Set1C/COMPASS complex, composed at least of the catalytic subunit Set1, wds/WDR5, Wdr82, Rbbp5, ash2, Cfp1/CXXC1, hcf and Dpy-30L1.

The protein localises to the nucleus. It is found in the chromosome. The catalysed reaction is L-lysyl(4)-[histone H3] + 3 S-adenosyl-L-methionine = N(6),N(6),N(6)-trimethyl-L-lysyl(4)-[histone H3] + 3 S-adenosyl-L-homocysteine + 3 H(+). The enzyme catalyses N(6)-methyl-L-lysyl(4)-[histone H3] + S-adenosyl-L-methionine = N(6),N(6)-dimethyl-L-lysyl(4)-[histone H3] + S-adenosyl-L-homocysteine + H(+). It catalyses the reaction N(6),N(6)-dimethyl-L-lysyl(4)-[histone H3] + S-adenosyl-L-methionine = N(6),N(6),N(6)-trimethyl-L-lysyl(4)-[histone H3] + S-adenosyl-L-homocysteine + H(+). In terms of biological role, catalytic component of the COMPASS (Set1C) complex that specifically mono-, di- and trimethylates histone H3 to form H3K4me1/2/3. Binds RNAs which might negatively affect its histone methyltransferase activity. COMPASS recognizes ubiquitinated H2B on one face of the nucleosome which stimulates the methylation of H3 on the opposing face. Set1-dependent trimethylation regulates chromatin changes at active promoters that ensure optimal RNA polymerase II release into productive elongation, thereby contributing to optimal transcription. The polypeptide is Histone-lysine N-methyltransferase SETD1 (Drosophila melanogaster (Fruit fly)).